The following is an 82-amino-acid chain: Small ribosomal subunit protein bS16 (82 aa).

It belongs to the bacterial ribosomal protein bS16 family.

This chain is Small ribosomal subunit protein bS16, found in Clostridium botulinum (strain ATCC 19397 / Type A).